Consider the following 400-residue polypeptide: MSKEKIALAYSGGLDTSVMIKWLKDKYDAEIVAVTGNLGQQKEIENLESKAYSTGASAFRFVDLRKTFVEEYIWRALKAGALYEDVYPLATALGRPLLAKALVDVALEENCTMLAHGCTGKGNDQVRFEVTFASLAPHLKILAPLREWEFTSREAEIAYALEHNIPVSATKKSPYSIDENIWGISIECGVLEDPMVTPPEDAYQITTSPENAPDTPASVEIEFVKGIPVALDGERMSGLDMIQKLNDIGAANGIGRLDMIENRVVGIKSREIYEAPAATILHFAHRELERLTLEKTVFQYKKNISQDYANIIYNGTWFSPMRKALDAFVDETQKPVTGLVRLKLYKGGISLLGRNSPNSLYNEELATYTEADTFNHKAAAGFIHLYGLGMKTFSQVNPGL.

9-17 contacts ATP; it reads AYSGGLDTS. Tyrosine 87 is a binding site for L-citrulline. Glycine 117 contributes to the ATP binding site. Residues threonine 119, asparagine 123, and aspartate 124 each coordinate L-aspartate. Asparagine 123 contacts L-citrulline. L-citrulline-binding residues include arginine 127, serine 176, serine 185, glutamate 261, and tyrosine 273.

The protein belongs to the argininosuccinate synthase family. Type 1 subfamily. In terms of assembly, homotetramer.

The protein resides in the cytoplasm. It carries out the reaction L-citrulline + L-aspartate + ATP = 2-(N(omega)-L-arginino)succinate + AMP + diphosphate + H(+). Its pathway is amino-acid biosynthesis; L-arginine biosynthesis; L-arginine from L-ornithine and carbamoyl phosphate: step 2/3. This is Argininosuccinate synthase from Chlorobium limicola (strain DSM 245 / NBRC 103803 / 6330).